The following is a 160-amino-acid chain: Cytochrome b6-f complex subunit 4 (160 aa).

3 consecutive transmembrane segments (helical) span residues 36-56 (LLYI…GLAV), 95-115 (LLGV…PFLE), and 131-151 (TVFL…TLPI).

Belongs to the cytochrome b family. PetD subfamily. In terms of assembly, the 4 large subunits of the cytochrome b6-f complex are cytochrome b6, subunit IV (17 kDa polypeptide, petD), cytochrome f and the Rieske protein, while the 4 small subunits are petG, petL, petM and petN. The complex functions as a dimer.

The protein resides in the plastid. Its subcellular location is the chloroplast thylakoid membrane. Functionally, component of the cytochrome b6-f complex, which mediates electron transfer between photosystem II (PSII) and photosystem I (PSI), cyclic electron flow around PSI, and state transitions. The polypeptide is Cytochrome b6-f complex subunit 4 (Solanum tuberosum (Potato)).